Here is an 88-residue protein sequence, read N- to C-terminus: Pigment dispersing factor homolog pdf-1 (88 aa).

The N-terminal stretch at 1 to 21 is a signal peptide; sequence MNRFIISMIALLAVFCAVSTA.

It is found in the secreted. Its function is as follows. Probable ligand of isoforms a and b of the calcitonin receptor-like protein, pdfr-1, a G-protein coupled receptor. May not signal through isoform c of pdfr-1. Involved in locomotion; more specifically mate searching behavior of males, independent of nutritional status. Involved in regulating the male-specific expression of TGFbeta-like daf-7 in the ASJ chemosensory neurons. Plays a role in circadian rhythms of locomotor activity. Involved in mediating arousal from the sleep-like state called lethargus, which occurs during molting between larval and adult stages, in part by regulating touch sensitivity, and working in concert with neuropeptide flp-2. In the presence of food, plays a role in initiating and extending exploratory roaming behavior, in opposition to 5-hydroxytryptamine (serotonin) signaling. This is Pigment dispersing factor homolog pdf-1 from Caenorhabditis elegans.